A 1377-amino-acid polypeptide reads, in one-letter code: DNA-directed RNA polymerase subunit beta' (1377 aa).

Zn(2+) contacts are provided by C70, C72, C85, and C88. The Mg(2+) site is built by D460, D462, and D464. Positions 808, 882, 889, and 892 each coordinate Zn(2+).

It belongs to the RNA polymerase beta' chain family. The RNAP catalytic core consists of 2 alpha, 1 beta, 1 beta' and 1 omega subunit. When a sigma factor is associated with the core the holoenzyme is formed, which can initiate transcription. Mg(2+) serves as cofactor. The cofactor is Zn(2+).

It catalyses the reaction RNA(n) + a ribonucleoside 5'-triphosphate = RNA(n+1) + diphosphate. Its function is as follows. DNA-dependent RNA polymerase catalyzes the transcription of DNA into RNA using the four ribonucleoside triphosphates as substrates. This chain is DNA-directed RNA polymerase subunit beta', found in Geotalea daltonii (strain DSM 22248 / JCM 15807 / FRC-32) (Geobacter daltonii).